Here is a 408-residue protein sequence, read N- to C-terminus: MSLSVTRENFDEWMVPVYVPAPFIPVRGEGSRLWDQQGKEYIDFAGGIAVNALGHAHPALREALNEQANRFWHTGNGYTNEPALRLAKKLIDATFAERVFFCNSGAEANEAALKLARKYAHDRVGNHKSGIVAFKNAFHGRTLFTVSAGGQPTYSQDFAPLPPDIRHAAYNDLNSASALIDDNTCAVIVEPVQGEGGVIPATKAFLQGLRELCDRYQALLIFDEVQTGVGRTGELYAYMHYGVTPDILTTAKALGGGFPIGAMLTTQNYASVMTPGTHGTTYGGNPLATAVAGKVLDIINTPEMQNGVRQRHDAFIERLNTLNVRFGMFSEIRGLGLLLGCVLQTEFAGKAKLIAQEAAKAGVMVLIAGGDVVRFAPALNVSDEEIATGLDRFALACERLQTGGAPCG.

K252 bears the N6-(pyridoxal phosphate)lysine mark.

It belongs to the class-III pyridoxal-phosphate-dependent aminotransferase family. AstC subfamily. It depends on pyridoxal 5'-phosphate as a cofactor.

The catalysed reaction is N(2)-succinyl-L-ornithine + 2-oxoglutarate = N-succinyl-L-glutamate 5-semialdehyde + L-glutamate. It functions in the pathway amino-acid degradation; L-arginine degradation via AST pathway; L-glutamate and succinate from L-arginine: step 3/5. Functionally, catalyzes the transamination of N(2)-succinylornithine and alpha-ketoglutarate into N(2)-succinylglutamate semialdehyde and glutamate. Can also act as an acetylornithine aminotransferase. This is Succinylornithine transaminase from Salmonella newport (strain SL254).